Reading from the N-terminus, the 450-residue chain is MRKTLTSIRFLSDGIRVKDKWNSLISDLVVEPTNSTGPLSGTTYIVKDNIATSHGYTTAASKILSNYESPFNATIIDLLSSNGSKLIGKSNLDEFGMGSANYNSYFNKVTNPYDNTKVPGGSSGGSAASVAGKMCSFSIGTDTGGSVRLPASYCNVFGFKPTYGRISRWGVIPYAQTLDTVGIIGENVNIIKRVYDVLNKYDDKDPTCLPEEVRQKIPTTKKETLTIGVPHEFVLKELSADVRESWEYALSKTCKLGHLVKPISIKTIKKALPSYYTLATAEAASNLSRYDGIRYGYNTNELVNSPIELIATNRSDGFGSEVQRRILLGNYTLSSDSGDHYLRATQIREELCAEFSSIFNNSHVLLQDEQSSDKVDLIMAPTSTSTAPTWDEFVSANEKNFLNSYVNDVLTVPASLAGIPAISVPVNGIGIQLMGQFGDDDLVLQLADQI.

Active-site charge relay system residues include Lys-47 and Ser-122. Ser-146 serves as the catalytic Acyl-ester intermediate.

This sequence belongs to the amidase family. GatA subfamily. In terms of assembly, subunit of the heterotrimeric GatFAB amidotransferase (AdT) complex, composed of A, B and F subunits.

The protein resides in the mitochondrion. The enzyme catalyses L-glutamyl-tRNA(Gln) + L-glutamine + ATP + H2O = L-glutaminyl-tRNA(Gln) + L-glutamate + ADP + phosphate + H(+). Its function is as follows. Allows the formation of correctly charged Gln-tRNA(Gln) through the transamidation of misacylated Glu-tRNA(Gln) in the mitochondria. The reaction takes place in the presence of glutamine and ATP through an activated gamma-phospho-Glu-tRNA(Gln). This is Glutamyl-tRNA(Gln) amidotransferase subunit A, mitochondrial from Candida albicans (strain SC5314 / ATCC MYA-2876) (Yeast).